The primary structure comprises 91 residues: Small ribosomal subunit protein uS15 (91 aa).

This sequence belongs to the universal ribosomal protein uS15 family. Part of the 30S ribosomal subunit. Forms a bridge to the 50S subunit in the 70S ribosome, contacting the 23S rRNA.

Functionally, one of the primary rRNA binding proteins, it binds directly to 16S rRNA where it helps nucleate assembly of the platform of the 30S subunit by binding and bridging several RNA helices of the 16S rRNA. Its function is as follows. Forms an intersubunit bridge (bridge B4) with the 23S rRNA of the 50S subunit in the ribosome. This chain is Small ribosomal subunit protein uS15, found in Amoebophilus asiaticus (strain 5a2).